The sequence spans 428 residues: Kynureninase (428 aa).

Pyridoxal 5'-phosphate-binding positions include Thr104, Thr105, Phe132–Asp135, Asp213, His216, and Tyr238. Position 239 is an N6-(pyridoxal phosphate)lysine (Lys239). The pyridoxal 5'-phosphate site is built by Trp267 and Thr295.

Belongs to the kynureninase family. In terms of assembly, homodimer. It depends on pyridoxal 5'-phosphate as a cofactor.

The catalysed reaction is L-kynurenine + H2O = anthranilate + L-alanine + H(+). It catalyses the reaction 3-hydroxy-L-kynurenine + H2O = 3-hydroxyanthranilate + L-alanine + H(+). Its pathway is amino-acid degradation; L-kynurenine degradation; L-alanine and anthranilate from L-kynurenine: step 1/1. It participates in cofactor biosynthesis; NAD(+) biosynthesis; quinolinate from L-kynurenine: step 2/3. Its function is as follows. Catalyzes the cleavage of L-kynurenine (L-Kyn) and L-3-hydroxykynurenine (L-3OHKyn) into anthranilic acid (AA) and 3-hydroxyanthranilic acid (3-OHAA), respectively. This chain is Kynureninase, found in Bacillus cereus (strain ZK / E33L).